Consider the following 370-residue polypeptide: Capsular polysaccharide phosphotransferase (370 aa).

This sequence belongs to the stealth family.

In terms of biological role, part of a capsular polysaccharide synthesis locus. The sequence is that of Capsular polysaccharide phosphotransferase from Actinobacillus suis.